The primary structure comprises 240 residues: tRNA (guanine-N(7)-)-methyltransferase (240 aa).

4 residues coordinate S-adenosyl-L-methionine: Glu-70, Glu-95, Asp-122, and Asp-145. Asp-145 is a catalytic residue. Substrate contacts are provided by residues Lys-149, Asp-181, and 218-221; that span reads TKFE.

This sequence belongs to the class I-like SAM-binding methyltransferase superfamily. TrmB family.

It carries out the reaction guanosine(46) in tRNA + S-adenosyl-L-methionine = N(7)-methylguanosine(46) in tRNA + S-adenosyl-L-homocysteine. Its pathway is tRNA modification; N(7)-methylguanine-tRNA biosynthesis. Catalyzes the formation of N(7)-methylguanine at position 46 (m7G46) in tRNA. The protein is tRNA (guanine-N(7)-)-methyltransferase of Pseudomonas entomophila (strain L48).